The primary structure comprises 98 residues: NADH-ubiquinone oxidoreductase chain 4L (98 aa).

3 helical membrane-spanning segments follow: residues 1–21, 29–49, and 58–78; these read MPLI…GMLV, SLLC…LMTL, and IVPI…LALL.

It belongs to the complex I subunit 4L family. In terms of assembly, core subunit of respiratory chain NADH dehydrogenase (Complex I) which is composed of 45 different subunits.

The protein resides in the mitochondrion inner membrane. It carries out the reaction a ubiquinone + NADH + 5 H(+)(in) = a ubiquinol + NAD(+) + 4 H(+)(out). Its function is as follows. Core subunit of the mitochondrial membrane respiratory chain NADH dehydrogenase (Complex I) which catalyzes electron transfer from NADH through the respiratory chain, using ubiquinone as an electron acceptor. Part of the enzyme membrane arm which is embedded in the lipid bilayer and involved in proton translocation. The polypeptide is NADH-ubiquinone oxidoreductase chain 4L (MT-ND4L) (Pan paniscus (Pygmy chimpanzee)).